We begin with the raw amino-acid sequence, 629 residues long: tRNA uridine 5-carboxymethylaminomethyl modification enzyme MnmG (629 aa).

13–18 (GGGHAG) contributes to the FAD binding site. 273 to 287 (GPRYCPSIEDKIHRF) contacts NAD(+).

This sequence belongs to the MnmG family. Homodimer. Heterotetramer of two MnmE and two MnmG subunits. FAD serves as cofactor.

It localises to the cytoplasm. In terms of biological role, NAD-binding protein involved in the addition of a carboxymethylaminomethyl (cmnm) group at the wobble position (U34) of certain tRNAs, forming tRNA-cmnm(5)s(2)U34. In Shewanella baltica (strain OS195), this protein is tRNA uridine 5-carboxymethylaminomethyl modification enzyme MnmG.